A 361-amino-acid polypeptide reads, in one-letter code: 3-dehydroquinate synthase (361 aa).

Residues S72–K77, T130–T131, K142, and K151 each bind NAD(+). Zn(2+) contacts are provided by E184, H247, and H264.

This sequence belongs to the sugar phosphate cyclases superfamily. Dehydroquinate synthase family. The cofactor is Co(2+). Requires Zn(2+) as cofactor. NAD(+) serves as cofactor.

It is found in the cytoplasm. It catalyses the reaction 7-phospho-2-dehydro-3-deoxy-D-arabino-heptonate = 3-dehydroquinate + phosphate. The protein operates within metabolic intermediate biosynthesis; chorismate biosynthesis; chorismate from D-erythrose 4-phosphate and phosphoenolpyruvate: step 2/7. Its function is as follows. Catalyzes the conversion of 3-deoxy-D-arabino-heptulosonate 7-phosphate (DAHP) to dehydroquinate (DHQ). This Bacillus cereus (strain ATCC 10987 / NRS 248) protein is 3-dehydroquinate synthase.